Reading from the N-terminus, the 617-residue chain is Vacuolar protein sorting-associated protein 33B (617 aa).

This sequence belongs to the STXBP/unc-18/SEC1 family. As to quaternary structure, probable core component of the class C core vacuole/endosome tethering (CORVET) complex. The common core is composed of the class C Vps proteins vps-11, vps-16 and vps-18, and which further associates with vps-8 and vps-33.2. Interacts with spe-39. Broadly expressed in somatic tissues including the pharynx, intestine, spermatheca, and in coelomocytes. Expressed in the lining of the gut lumen.

Its subcellular location is the early endosome. It localises to the late endosome membrane. It is found in the lysosome membrane. The protein resides in the cytoplasmic vesicle. The protein localises to the clathrin-coated vesicle. Its subcellular location is the recycling endosome. Its function is as follows. Plays a role in vesicle-mediated protein trafficking to lysosomal compartments and in membrane docking/fusion reactions of late endosomes/lysosomes. Believed to act as a component of the putative CORVET endosomal tethering complex which is proposed to be involved in the rab-5-to-rab-7 endosome conversion probably implicating sand-1, and via binding SNAREs and SNARE complexes to mediate tethering and docking events during SNARE-mediated membrane fusion. The CORVET complex is proposed to function as a rab-5 effector to mediate early endosome fusion probably in specific endosome subpopulations. Most likely within the CORVET complex, it is involved in the fusion of endocytic compartments. Required for sperm development and function. The polypeptide is Vacuolar protein sorting-associated protein 33B (Caenorhabditis elegans).